A 193-amino-acid polypeptide reads, in one-letter code: Large ribosomal subunit protein uL5 (193 aa).

It belongs to the universal ribosomal protein uL5 family. In terms of assembly, part of the 50S ribosomal subunit; part of the 5S rRNA/L5/L18/L25 subcomplex. Contacts the 5S rRNA and the P site tRNA. Forms a bridge to the 30S subunit in the 70S ribosome.

Functionally, this is one of the proteins that bind and probably mediate the attachment of the 5S RNA into the large ribosomal subunit, where it forms part of the central protuberance. In the 70S ribosome it contacts protein S13 of the 30S subunit (bridge B1b), connecting the 2 subunits; this bridge is implicated in subunit movement. Contacts the P site tRNA; the 5S rRNA and some of its associated proteins might help stabilize positioning of ribosome-bound tRNAs. The chain is Large ribosomal subunit protein uL5 from Pseudarthrobacter chlorophenolicus (strain ATCC 700700 / DSM 12829 / CIP 107037 / JCM 12360 / KCTC 9906 / NCIMB 13794 / A6) (Arthrobacter chlorophenolicus).